The chain runs to 372 residues: MAAPVPWACCAVLAAAAAVVYAQRHSPQEAPHVQYERLGSDVTLPCGTANWDAAVTWRVNGTDLAPDLLNGSQLVLHGLELGHSGLYACFHRDSWHLRHQVLLHVGLPPREPVLSCRSNTYPKGFYCSWHLPTPTYIPNTFNVTVLHGSKIMVCEKDPALKNRCHIRYMHLFSTIKYKVSISVSNALGHNATAITFDEFTIVKPDPPENVVARPVPSNPRRLEVTWQTPSTWPDPESFPLKFFLRYRPLILDQWQHVELSDGTAHTITDAYAGKEYIIQVAAKDNEIGTWSDWSVAAHATPWTEEPRHLTTEAQAAETTTSTTSSLAPPPTTKICDPGELGSGGGPSAPFLVSVPITLALAAAAATASSLLI.

An N-terminal signal peptide occupies residues 1–22; it reads MAAPVPWACCAVLAAAAAVVYA. The region spanning 27–104 is the Ig-like C2-type domain; sequence PQEAPHVQYE…WHLRHQVLLH (78 aa). Cys46 and Cys89 are disulfide-bonded. N-linked (GlcNAc...) asparagine glycosylation is found at Asn60, Asn70, Asn142, and Asn190. Fibronectin type-III domains lie at 108–205 and 206–306; these read PPRE…VKPD and PPEN…TEEP. The short motif at 290–294 is the WSXWS motif element; sequence WSDWS. Residues 301 to 340 form a disordered region; that stretch reads PWTEEPRHLTTEAQAAETTTSTTSSLAPPPTTKICDPGEL. The span at 311–326 shows a compositional bias: low complexity; the sequence is TEAQAAETTTSTTSSL. A lipid anchor (GPI-anchor amidated serine) is attached at Ser342. Residues 343–372 constitute a propeptide, removed in mature form; it reads GGGPSAPFLVSVPITLALAAAAATASSLLI.

It belongs to the type I cytokine receptor family. Type 3 subfamily. Forms a heterotrimer with LIFR and IL6ST. Interacts with heterodimeric neurotropic cytokine composed of CLCF1/CLC and CRLF1/CLF-1. Either alone or in complex with the heterodimer CLCF1-CRLF1 interacts with SORL1; this interaction may promote internalization and lysosomal degradation. Component of a receptor complex composed of IL6ST/GP130, IL27RA/WSX1 and CNTFR which interacts with the neuroprotective peptide humanin. In terms of tissue distribution, nervous system and skeletal muscle.

It localises to the cell membrane. Binds to CNTF. The alpha subunit provides the receptor specificity. Receptor for heterodimeric neurotropic cytokine composed of CLCF1/CLC and CRLF1/CLF-1. Acts as a receptor for the neuroprotective peptide humanin as part of a complex with IL6ST/GP130 and IL27RA/WSX1. This is Ciliary neurotrophic factor receptor subunit alpha (CNTFR) from Homo sapiens (Human).